The sequence spans 700 residues: Probable pre-mRNA-splicing factor ATP-dependent RNA helicase DEAH4 (700 aa).

An N-acetylalanine modification is found at A2. Positions 14-178 constitute a Helicase ATP-binding domain; it reads VETVEKNSVV…FSGCPVLNVP (165 aa). 27–34 provides a ligand contact to ATP; it reads GETGSGKS. The DEAH box signature appears at 124–127; sequence DEAH. Residues 200–377 form the Helicase C-terminal domain; that stretch reads SLKVAIDIHV…GSVLYLKSLD (178 aa). Disordered regions lie at residues 463 to 486 and 654 to 682; these read PARS…NGSG and GPAP…SENV.

The protein belongs to the DEAD box helicase family. DEAH subfamily. PRP22 sub-subfamily.

It carries out the reaction ATP + H2O = ADP + phosphate + H(+). Its function is as follows. May be involved in pre-mRNA splicing. The polypeptide is Probable pre-mRNA-splicing factor ATP-dependent RNA helicase DEAH4 (Arabidopsis thaliana (Mouse-ear cress)).